Here is a 152-residue protein sequence, read N- to C-terminus: Protein X (152 aa).

The tract at residues 68 to 115 (PCALRFTSATWRCMETPMNSVTCLRKRTLGLRTAPPTVMEQYIKDCLF) is mitochondrial targeting sequence.

The protein belongs to the orthohepadnavirus protein X family. May form homodimer. May interact with host CEBPA, CFLAR, CREB1, DDB1, E4F1, HBXIP, HSPD1/HSP60, NFKBIA, POLR2E and SMAD4. Interacts with host SMC5-SMC6 complex and induces its degradation. Interacts with host TRPC4AP; leading to prevent ubiquitination of TRPC4AP. Interacts with host PLSCR1; this interaction promotes ubiquitination and degradation of HBx and impairs HBx-mediated cell proliferation. A fraction may be phosphorylated in insect cells and HepG2 cells, a human hepatoblastoma cell line. Phosphorylated in vitro by host protein kinase C or mitogen-activated protein kinase. N-acetylated in insect cells.

It localises to the host cytoplasm. It is found in the host nucleus. Its subcellular location is the host mitochondrion. Functionally, multifunctional protein that plays a role in silencing host antiviral defenses and promoting viral transcription. Does not seem to be essential for HBV infection. May be directly involved in development of cirrhosis and liver cancer (hepatocellular carcinoma). Most of cytosolic activities involve modulation of cytosolic calcium. The effect on apoptosis is controversial depending on the cell types in which the studies have been conducted. May induce apoptosis by localizing in mitochondria and causing loss of mitochondrial membrane potential. May also modulate apoptosis by binding host CFLAR, a key regulator of the death-inducing signaling complex (DISC). Promotes viral transcription by using the host E3 ubiquitin ligase DDB1 to target the SMC5-SMC6 complex to proteasomal degradation. This host complex would otherwise bind to viral episomal DNA, and prevents its transcription. Moderately stimulates transcription of many different viral and cellular transcription elements. Promoters and enhancers stimulated by HBx contain DNA binding sites for NF-kappa-B, AP-1, AP-2, c-EBP, ATF/CREB, or the calcium-activated factor NF-AT. This Lagothrix lagotricha (Brown woolly monkey) protein is Protein X.